The primary structure comprises 255 residues: Isoprenyl transferase (255 aa).

D35 is an active-site residue. D35 provides a ligand contact to Mg(2+). Substrate-binding positions include 36–39 (GNGR), W40, R48, H52, and 80–82 (STE). N83 (proton acceptor) is an active-site residue. Residues W84, R86, R203, and 209–211 (RIS) contribute to the substrate site. Position 222 (E222) interacts with Mg(2+).

It belongs to the UPP synthase family. Homodimer. Mg(2+) is required as a cofactor.

In terms of biological role, catalyzes the condensation of isopentenyl diphosphate (IPP) with allylic pyrophosphates generating different type of terpenoids. This chain is Isoprenyl transferase, found in Clostridium tetani (strain Massachusetts / E88).